Reading from the N-terminus, the 811-residue chain is Probable glutamine--tRNA ligase (811 aa).

Residues 190–217 (DAAAGKKKGAKAKNSKQKTVDSGKAKEQ) are disordered. A compositionally biased stretch (basic residues) spans 194–205 (GKKKGAKAKNSK). Residues 207-217 (KTVDSGKAKEQ) are compositionally biased toward basic and acidic residues. The short motif at 269–279 (PEPNGYLHIGH) is the 'HIGH' region element. Residues 270-272 (EPN) and 276-282 (HIGHSKA) each bind ATP. 2 residues coordinate L-glutamine: Asp-302 and Tyr-447. ATP is bound by residues Thr-466, 495–496 (RL), and 503–505 (MSK). The short motif at 502–506 (LMSKR) is the 'KMSKS' region element.

This sequence belongs to the class-I aminoacyl-tRNA synthetase family.

The protein resides in the cytoplasm. The catalysed reaction is tRNA(Gln) + L-glutamine + ATP = L-glutaminyl-tRNA(Gln) + AMP + diphosphate. The sequence is that of Probable glutamine--tRNA ligase (qrs1) from Schizosaccharomyces pombe (strain 972 / ATCC 24843) (Fission yeast).